The sequence spans 100 residues: MLEHALILGAYLFSIGIYGLVTSRNMVKALMCLELILNAVNLNLVTFSNFFDSRQVKGDIFSIFVIAIAAAEAAIGLAIVLAIYRNRKSTRIDQFNLSKW.

A run of 3 helical transmembrane segments spans residues 1–21 (MLEHALILGAYLFSIGIYGLV), 31–51 (MCLELILNAVNLNLVTFSNFF), and 63–83 (IFVIAIAAAEAAIGLAIVLAI).

This sequence belongs to the complex I subunit 4L family. NDH is composed of at least 16 different subunits, 5 of which are encoded in the nucleus.

The protein localises to the plastid. It is found in the chloroplast thylakoid membrane. The enzyme catalyses a plastoquinone + NADH + (n+1) H(+)(in) = a plastoquinol + NAD(+) + n H(+)(out). It catalyses the reaction a plastoquinone + NADPH + (n+1) H(+)(in) = a plastoquinol + NADP(+) + n H(+)(out). Its function is as follows. NDH shuttles electrons from NAD(P)H:plastoquinone, via FMN and iron-sulfur (Fe-S) centers, to quinones in the photosynthetic chain and possibly in a chloroplast respiratory chain. The immediate electron acceptor for the enzyme in this species is believed to be plastoquinone. Couples the redox reaction to proton translocation, and thus conserves the redox energy in a proton gradient. This Cryptomeria japonica (Japanese cedar) protein is NAD(P)H-quinone oxidoreductase subunit 4L, chloroplastic.